The sequence spans 296 residues: Ceramide synthase LOH2 (296 aa).

The next 6 membrane-spanning stretches (helical) occupy residues Val-19–Leu-39, Leu-80–Ala-100, Leu-121–Glu-141, Ile-158–Ala-178, Phe-206–Ile-226, and Met-254–Val-274. Residues Val-71–Lys-278 form the TLC domain. Phosphoserine is present on residues Ser-289 and Ser-291.

As to expression, expressed ubiquitously with highest levels in pollen.

The protein localises to the endoplasmic reticulum membrane. The enzyme catalyses a sphingoid base + hexadecanoyl-CoA = an N-hexadecanoyl-sphingoid base + CoA + H(+). It carries out the reaction sphinganine + hexadecanoyl-CoA = N-hexadecanoylsphinganine + CoA + H(+). It catalyses the reaction sphing-4-enine + hexadecanoyl-CoA = N-hexadecanoylsphing-4-enine + CoA + H(+). The catalysed reaction is sphinga-(4E,8E)-dienine + hexadecanoyl-CoA = N-hexadecanoylsphinga-(4E,8E)-dienine + CoA + H(+). The enzyme catalyses sphinga-(4E,8Z)-dienine + hexadecanoyl-CoA = N-hexadecanoylsphinga-(4E,8Z)-dienine + CoA + H(+). The protein operates within sphingolipid metabolism. With respect to regulation, inhibited by the mycotoxin fumonisin B(1), a sphingosine analog mycotoxins produced by pathogenic fungi. Activated by divalent cation such as magnesium Mg(2+), zinc Zn(2+), manganese Mn(2+) and calcium Ca(2+). Prevents cell division in root meristems and promotes salicylic acid (SA) production and hypersensitive response (HR). Catalyzes the biosynthesis of ceramide sphingolipids with C(16) fatty acids, structural membrane lipids involved in membrane trafficking (e.g. early endosomes) and cell polarity (e.g. polar auxin transport related proteins); accepts only C16:0 fatty acids, but with a wide range of d18 sphingoid bases, such as sphinganine (d18:0) and palmitoyl-CoA. Mediates resistance to sphinganine-analog mycotoxins (SAMs, e.g. fumonisin B(1)) by restoring the sphingolipid biosynthesis. Could salvage the transport of GPI-anchored proteins from the endoplasmic reticulum to the Golgi apparatus in ceramides-depleted cells after SAM exposure. Contributes to hypoxic conditions tolerance (e.g. submergences), especially in the dark, by promoting the formation of very-long-chain (VLC) ceramide species (22:1, 24:1 and 26:1) and of VLC unsaturated ceramides, which are modulating CTR1-mediated ethylene signaling leading to endoplasmic reticulum (ER)-to-nucleus translocation of EIN2 and EIN3. The chain is Ceramide synthase LOH2 from Arabidopsis thaliana (Mouse-ear cress).